We begin with the raw amino-acid sequence, 443 residues long: Phosphoglucosamine mutase (443 aa).

The active-site Phosphoserine intermediate is serine 101. The Mg(2+) site is built by serine 101, aspartate 240, aspartate 242, and aspartate 244. Serine 101 carries the phosphoserine modification.

It belongs to the phosphohexose mutase family. Mg(2+) serves as cofactor. In terms of processing, activated by phosphorylation.

It carries out the reaction alpha-D-glucosamine 1-phosphate = D-glucosamine 6-phosphate. Functionally, catalyzes the conversion of glucosamine-6-phosphate to glucosamine-1-phosphate. The sequence is that of Phosphoglucosamine mutase from Psychromonas ingrahamii (strain DSM 17664 / CCUG 51855 / 37).